The following is a 119-amino-acid chain: Large ribosomal subunit protein bL20 (119 aa).

This sequence belongs to the bacterial ribosomal protein bL20 family.

In terms of biological role, binds directly to 23S ribosomal RNA and is necessary for the in vitro assembly process of the 50S ribosomal subunit. It is not involved in the protein synthesizing functions of that subunit. This is Large ribosomal subunit protein bL20 from Halorhodospira halophila (strain DSM 244 / SL1) (Ectothiorhodospira halophila (strain DSM 244 / SL1)).